The following is a 192-amino-acid chain: uncharacterized protein (192 aa).

In terms of domain architecture, Nudix hydrolase spans 29 to 160 (QRQAAVLVPV…PLDIHRRGNH (132 aa)). Residues 67 to 89 (GAVDDTDASLIAAALREAQEEVA) carry the Nudix box motif. Mg(2+) is bound by residues glutamate 83 and glutamate 87.

This sequence belongs to the Nudix hydrolase family. PCD1 subfamily. The cofactor is Mn(2+). Mg(2+) is required as a cofactor.

Functionally, probably mediates the hydrolysis of some nucleoside diphosphate derivatives. This is an uncharacterized protein from Cronobacter sakazakii (strain ATCC BAA-894) (Enterobacter sakazakii).